Reading from the N-terminus, the 220-residue chain is CASP-like protein 1E1 (220 aa).

Residues 1–57 (METPTPRVKPGFNGVGVGMGSSVNGSSRRAGYYMGPAGAVAVAGGGRAAAAAPVDGC) are Cytoplasmic-facing. The chain crosses the membrane as a helical span at residues 58-78 (SVALRVFVLAATLVSAVVMGV). Over 79-108 (DRQTSTIRITVTDALPPLEVPLTANWSYSS) the chain is Extracellular. A glycan (N-linked (GlcNAc...) asparagine) is linked at asparagine 103. The chain crosses the membrane as a helical span at residues 109-129 (AFVYFVVANAMVCLFSAAALA). The Cytoplasmic segment spans residues 130-144 (ACRSRAAMVPVMVGD). Residues 145–165 (LLALALLYSAVGAAAEFGILG) traverse the membrane as a helical segment. At 166–187 (ERGNSHVRWPKVCNVYGRFCER) the chain is on the extracellular side. Residues 188-208 (AMAAVIVSLIAAFANLVLLML) traverse the membrane as a helical segment. Over 209–220 (NILTIHKSSSYY) the chain is Cytoplasmic.

It belongs to the Casparian strip membrane proteins (CASP) family. As to quaternary structure, homodimer and heterodimers.

The protein resides in the cell membrane. This is CASP-like protein 1E1 from Zea mays (Maize).